The chain runs to 544 residues: Prolyl 4-hydroxylase subunit alpha-3 (544 aa).

The N-terminal stretch at Met1–Gly19 is a signal peptide. Positions Leu107 to Glu131 form a coiled coil. The TPR repeat unit spans residues Glu227–Asn260. N-linked (GlcNAc...) asparagine glycosylation is present at Asn248. A Fe2OG dioxygenase domain is found at Tyr422 to Glu529. Fe cation contacts are provided by His440 and Asp442. N-linked (GlcNAc...) asparagine glycosylation is present at Asn482. Fe cation is bound at residue His510. Lys520 is a 2-oxoglutarate binding site.

The protein belongs to the P4HA family. As to quaternary structure, heterotetramer of two alpha-3 chains and two beta chains (the beta chain is the multi-functional PDI). It depends on Fe(2+) as a cofactor. Requires L-ascorbate as cofactor. N-glycosylation plays no role in the catalytic activity.

It is found in the endoplasmic reticulum lumen. The catalysed reaction is L-prolyl-[collagen] + 2-oxoglutarate + O2 = trans-4-hydroxy-L-prolyl-[collagen] + succinate + CO2. Functionally, catalyzes the post-translational formation of 4-hydroxyproline in -Xaa-Pro-Gly- sequences in collagens and other proteins. This is Prolyl 4-hydroxylase subunit alpha-3 (P4HA3) from Bos taurus (Bovine).